Here is a 447-residue protein sequence, read N- to C-terminus: UDP-N-acetylmuramoylalanine--D-glutamate ligase (447 aa).

112–118 (GTNGKST) lines the ATP pocket.

This sequence belongs to the MurCDEF family.

Its subcellular location is the cytoplasm. It carries out the reaction UDP-N-acetyl-alpha-D-muramoyl-L-alanine + D-glutamate + ATP = UDP-N-acetyl-alpha-D-muramoyl-L-alanyl-D-glutamate + ADP + phosphate + H(+). The protein operates within cell wall biogenesis; peptidoglycan biosynthesis. Its function is as follows. Cell wall formation. Catalyzes the addition of glutamate to the nucleotide precursor UDP-N-acetylmuramoyl-L-alanine (UMA). The sequence is that of UDP-N-acetylmuramoylalanine--D-glutamate ligase from Legionella pneumophila subsp. pneumophila (strain Philadelphia 1 / ATCC 33152 / DSM 7513).